The sequence spans 331 residues: Geranylgeranyl pyrophosphate synthase dpmaD (331 aa).

The isopentenyl diphosphate site is built by Lys53, Arg56, and His85. 2 residues coordinate Mg(2+): Asp92 and Asp96. Arg101 provides a ligand contact to dimethylallyl diphosphate. Residue Arg102 participates in isopentenyl diphosphate binding. Lys179, Thr180, and Gln213 together coordinate dimethylallyl diphosphate. Asp216 contributes to the Mg(2+) binding site. 3 residues coordinate dimethylallyl diphosphate: Asn220, Lys230, and Lys240.

The protein belongs to the FPP/GGPP synthase family. The cofactor is Mg(2+).

The catalysed reaction is isopentenyl diphosphate + dimethylallyl diphosphate = (2E)-geranyl diphosphate + diphosphate. The enzyme catalyses isopentenyl diphosphate + (2E)-geranyl diphosphate = (2E,6E)-farnesyl diphosphate + diphosphate. It catalyses the reaction isopentenyl diphosphate + (2E,6E)-farnesyl diphosphate = (2E,6E,10E)-geranylgeranyl diphosphate + diphosphate. It functions in the pathway secondary metabolite biosynthesis; terpenoid biosynthesis. In terms of biological role, geranylgeranyl pyrophosphate synthase; part of the gene cluster that mediates the biosynthesis of the diterpenoid pyrones subglutinols A and B. The first step of the pathway is the synthesis of the alpha-pyrone moiety by the polyketide synthase dpmaA via condensation of one acetyl-CoA starter unit with 3 malonyl-CoA units and 2 methylations. The alpha-pyrone is then combined with geranylgeranyl pyrophosphate (GGPP) formed by the GGPP synthase dpmaD through the action of the prenyltransferase dpmaC to yield a linear alpha-pyrone diterpenoid. Subsequent steps in the diterpenoid pyrone biosynthetic pathway involve the decalin core formation, which is initiated by the epoxidation of the C10-C11 olefin by the FAD-dependent oxidoreductase dpmaE, and is followed by a cyclization cascade catalyzed by the terpene cyclase dpmaB. The dehydrogenase dpmaF is then involved in tetrahydrofuran (THF) ring formation at the C5 unit to complete the formation of subglutinols A and B. This chain is Geranylgeranyl pyrophosphate synthase dpmaD, found in Metarhizium anisopliae (Entomophthora anisopliae).